Here is a 990-residue protein sequence, read N- to C-terminus: Storkhead-box protein 1 (990 aa).

A compositionally biased stretch (basic and acidic residues) spans 396 to 408 (TTRHKDSSKEVIG). Disordered regions lie at residues 396-471 (TTRH…VHHL), 562-586 (VAKA…PRRV), 712-736 (GLSD…DGGC), and 809-832 (LFSN…SRIP). A compositionally biased stretch (basic residues) spans 416–431 (KSRRRGSSHKGRHKAR). A compositionally biased stretch (polar residues) spans 809–830 (LFSNAGESPNPDLSDNPGQNSR).

Detected in sensory epithelial cells of the inner ear but not in adjacent surrounding tissue (at protein level).

Its subcellular location is the nucleus. The protein localises to the cytoplasm. The protein resides in the cytoskeleton. It localises to the microtubule organizing center. It is found in the centrosome. Involved in regulating the levels of reactive oxidative species and reactive nitrogen species and in mitochondrial homeostasis in the placenta. Required for regulation of inner ear epithelial cell proliferation via the AKT signaling pathway. Involved in cell cycle regulation by binding to the CCNB1 promoter, up-regulating its expression and promoting mitotic entry. Induces phosphorylation of MAPT/tau. This chain is Storkhead-box protein 1, found in Mus musculus (Mouse).